Consider the following 112-residue polypeptide: UPF0102 protein CFF8240_0294 (112 aa).

This sequence belongs to the UPF0102 family.

The polypeptide is UPF0102 protein CFF8240_0294 (Campylobacter fetus subsp. fetus (strain 82-40)).